The chain runs to 951 residues: 2-oxoglutarate dehydrogenase E1 component (951 aa).

The disordered stretch occupies residues 906–925 (RRRRSSPAEGNPTAHKQEQA).

Belongs to the alpha-ketoglutarate dehydrogenase family. As to quaternary structure, homodimer. Part of the 2-oxoglutarate dehydrogenase (OGDH) complex composed of E1 (2-oxoglutarate dehydrogenase), E2 (dihydrolipoamide succinyltransferase) and E3 (dihydrolipoamide dehydrogenase); the complex contains multiple copies of the three enzymatic components (E1, E2 and E3). Thiamine diphosphate serves as cofactor.

It catalyses the reaction N(6)-[(R)-lipoyl]-L-lysyl-[protein] + 2-oxoglutarate + H(+) = N(6)-[(R)-S(8)-succinyldihydrolipoyl]-L-lysyl-[protein] + CO2. E1 component of the 2-oxoglutarate dehydrogenase (OGDH) complex which catalyzes the decarboxylation of 2-oxoglutarate, the first step in the conversion of 2-oxoglutarate to succinyl-CoA and CO(2). This Exiguobacterium sp. (strain ATCC BAA-1283 / AT1b) protein is 2-oxoglutarate dehydrogenase E1 component.